The following is a 185-amino-acid chain: Ribose 1,5-bisphosphate phosphokinase PhnN (185 aa).

10-17 (GPSGSGKD) is a binding site for ATP.

It belongs to the ribose 1,5-bisphosphokinase family.

The enzyme catalyses alpha-D-ribose 1,5-bisphosphate + ATP = 5-phospho-alpha-D-ribose 1-diphosphate + ADP. Its pathway is metabolic intermediate biosynthesis; 5-phospho-alpha-D-ribose 1-diphosphate biosynthesis; 5-phospho-alpha-D-ribose 1-diphosphate from D-ribose 5-phosphate (route II): step 3/3. Functionally, catalyzes the phosphorylation of ribose 1,5-bisphosphate to 5-phospho-D-ribosyl alpha-1-diphosphate (PRPP). This Escherichia coli O157:H7 protein is Ribose 1,5-bisphosphate phosphokinase PhnN.